The primary structure comprises 158 residues: Large ribosomal subunit protein uL16 (158 aa).

The segment at 1–22 is disordered; that stretch reads MLSPKRTKYRKQQRGRMKGKAT.

It belongs to the universal ribosomal protein uL16 family. In terms of assembly, part of the 50S ribosomal subunit.

Binds 23S rRNA and is also seen to make contacts with the A and possibly P site tRNAs. This Synechococcus sp. (strain JA-3-3Ab) (Cyanobacteria bacterium Yellowstone A-Prime) protein is Large ribosomal subunit protein uL16.